A 512-amino-acid polypeptide reads, in one-letter code: UDP-N-acetylmuramoyl-L-alanyl-D-glutamate--2,6-diaminopimelate ligase (512 aa).

Residue S32 coordinates UDP-N-acetyl-alpha-D-muramoyl-L-alanyl-D-glutamate. Residue 114-120 coordinates ATP; it reads GTNGKTT. UDP-N-acetyl-alpha-D-muramoyl-L-alanyl-D-glutamate-binding positions include 156 to 157, S183, and R191; that span reads TT. An N6-carboxylysine modification is found at K223. Meso-2,6-diaminopimelate-binding positions include R395, 419–422, G469, and E473; that span reads DNPR. Residues 419 to 422 carry the Meso-diaminopimelate recognition motif motif; it reads DNPR.

The protein belongs to the MurCDEF family. MurE subfamily. Mg(2+) is required as a cofactor. Post-translationally, carboxylation is probably crucial for Mg(2+) binding and, consequently, for the gamma-phosphate positioning of ATP.

It is found in the cytoplasm. It catalyses the reaction UDP-N-acetyl-alpha-D-muramoyl-L-alanyl-D-glutamate + meso-2,6-diaminopimelate + ATP = UDP-N-acetyl-alpha-D-muramoyl-L-alanyl-gamma-D-glutamyl-meso-2,6-diaminopimelate + ADP + phosphate + H(+). The protein operates within cell wall biogenesis; peptidoglycan biosynthesis. Functionally, catalyzes the addition of meso-diaminopimelic acid to the nucleotide precursor UDP-N-acetylmuramoyl-L-alanyl-D-glutamate (UMAG) in the biosynthesis of bacterial cell-wall peptidoglycan. The protein is UDP-N-acetylmuramoyl-L-alanyl-D-glutamate--2,6-diaminopimelate ligase of Chlorobium phaeobacteroides (strain DSM 266 / SMG 266 / 2430).